Here is a 406-residue protein sequence, read N- to C-terminus: Tyrosine--tRNA ligase (406 aa).

Tyrosine 35 contacts L-tyrosine. The short motif at proline 40–histidine 49 is the 'HIGH' region element. Tyrosine 168 and glutamine 172 together coordinate L-tyrosine. A 'KMSKS' region motif is present at residues lysine 228–threonine 232. Position 231 (lysine 231) interacts with ATP. Positions leucine 340–glutamate 404 constitute an S4 RNA-binding domain.

The protein belongs to the class-I aminoacyl-tRNA synthetase family. TyrS type 1 subfamily. As to quaternary structure, homodimer.

It localises to the cytoplasm. It catalyses the reaction tRNA(Tyr) + L-tyrosine + ATP = L-tyrosyl-tRNA(Tyr) + AMP + diphosphate + H(+). In terms of biological role, catalyzes the attachment of tyrosine to tRNA(Tyr) in a two-step reaction: tyrosine is first activated by ATP to form Tyr-AMP and then transferred to the acceptor end of tRNA(Tyr). The polypeptide is Tyrosine--tRNA ligase (Clostridium beijerinckii (strain ATCC 51743 / NCIMB 8052) (Clostridium acetobutylicum)).